The following is a 154-amino-acid chain: ATP synthase subunit b (154 aa).

Residues 9 to 29 (AIAFVIFVWFCMKYVWPPLMA) form a helical membrane-spanning segment.

Belongs to the ATPase B chain family. As to quaternary structure, F-type ATPases have 2 components, F(1) - the catalytic core - and F(0) - the membrane proton channel. F(1) has five subunits: alpha(3), beta(3), gamma(1), delta(1), epsilon(1). F(0) has three main subunits: a(1), b(2) and c(10-14). The alpha and beta chains form an alternating ring which encloses part of the gamma chain. F(1) is attached to F(0) by a central stalk formed by the gamma and epsilon chains, while a peripheral stalk is formed by the delta and b chains.

It localises to the cell inner membrane. In terms of biological role, f(1)F(0) ATP synthase produces ATP from ADP in the presence of a proton or sodium gradient. F-type ATPases consist of two structural domains, F(1) containing the extramembraneous catalytic core and F(0) containing the membrane proton channel, linked together by a central stalk and a peripheral stalk. During catalysis, ATP synthesis in the catalytic domain of F(1) is coupled via a rotary mechanism of the central stalk subunits to proton translocation. Component of the F(0) channel, it forms part of the peripheral stalk, linking F(1) to F(0). The chain is ATP synthase subunit b from Klebsiella pneumoniae subsp. pneumoniae (strain ATCC 700721 / MGH 78578).